Consider the following 124-residue polypeptide: Small ribosomal subunit protein uS12 (124 aa).

3-methylthioaspartic acid is present on Asp-89.

This sequence belongs to the universal ribosomal protein uS12 family. As to quaternary structure, part of the 30S ribosomal subunit. Contacts proteins S8 and S17. May interact with IF1 in the 30S initiation complex.

With S4 and S5 plays an important role in translational accuracy. Its function is as follows. Interacts with and stabilizes bases of the 16S rRNA that are involved in tRNA selection in the A site and with the mRNA backbone. Located at the interface of the 30S and 50S subunits, it traverses the body of the 30S subunit contacting proteins on the other side and probably holding the rRNA structure together. The combined cluster of proteins S8, S12 and S17 appears to hold together the shoulder and platform of the 30S subunit. This is Small ribosomal subunit protein uS12 from Vibrio atlanticus (strain LGP32) (Vibrio splendidus (strain Mel32)).